Reading from the N-terminus, the 1988-residue chain is Sodium channel protein type 9 subunit alpha (1988 aa).

The Cytoplasmic portion of the chain corresponds to 1 to 125 (MAMLPPPGPQ…RRISIKILVH (125 aa)). Residues 26–39 (RIAERKSKEPKEEK) show a composition bias toward basic and acidic residues. A disordered region spans residues 26-55 (RIAERKSKEPKEEKKDDDEEAPKPSSDLEA). The stretch at 112-410 (FSPLRRISIK…VAMAYEEQNQ (299 aa)) is one I repeat. A helical transmembrane segment spans residues 126–145 (SLFSMLIMCTILTNCIFMTM). The Extracellular segment spans residues 146 to 150 (NNPPD). A helical membrane pass occupies residues 151 to 172 (WTKNVEYTFTGIYTFESLVKIL). The Cytoplasmic portion of the chain corresponds to 173–185 (ARGFCVGEFTFLR). The helical transmembrane segment at 186–204 (DPWNWLDFVVIVFAYLTEF) threads the bilayer. The Extracellular portion of the chain corresponds to 205 to 210 (VNLGNV). A glycan (N-linked (GlcNAc...) asparagine) is linked at asparagine 209. Residues 211–227 (SALRTFRVLRALKTISV) form a helical membrane-spanning segment. Topologically, residues 228 to 241 (IPGLKTIVGALIQS) are cytoplasmic. The helical transmembrane segment at 242–267 (VKKLSDVMILTVFCLSVFALIGLQLF) threads the bilayer. The Extracellular portion of the chain corresponds to 268-346 (MGNLKHKCFR…PDYGYTSFDT (79 aa)). A disulfide bond links cysteine 275 and cysteine 324. N-linked (GlcNAc...) asparagine glycosylation is present at asparagine 283. Residues 347-363 (FSWAFLALFRLMTQDYW) constitute an intramembrane region (pore-forming). Topologically, residues 364 to 376 (ENLYQQTLRAAGK) are extracellular. A helical transmembrane segment spans residues 377 to 402 (TYMIFFVVVIFLGSFYLINLILAVVA). At 403 to 745 (MAYEEQNQAN…CIYFIVMDPF (343 aa)) the chain is on the cytoplasmic side. The span at 461–471 (SSSETSKLSSK) shows a compositional bias: low complexity. Disordered stretches follow at residues 461–543 (SSSE…RGSL) and 565–611 (GSET…SPPM). The span at 474–486 (KERRNRRKKKNQK) shows a compositional bias: basic residues. Basic and acidic residues-rich tracts occupy residues 489–510 (SSGEEKGDAEKLSKSESEDSIR) and 573–585 (DEHSIFGDNESRR). Residues 726 to 989 (CSPYWIKFKK…EEDPDANNLQ (264 aa)) form an II repeat. A helical transmembrane segment spans residues 746 to 762 (VDLAITICIVLNTLFMA). Over 763–771 (MEHHPMTEE) the chain is Extracellular. A helical transmembrane segment spans residues 772–796 (FKNVLAIGNLVFTGIFAAEMVLKLI). The Cytoplasmic portion of the chain corresponds to 797–805 (AMDPYEYFQ). Residues 806–822 (VGWNIFDSLIVTLSLVE) form a helical membrane-spanning segment. The Extracellular portion of the chain corresponds to 823–831 (LFLADVEGL). The chain crosses the membrane as a helical span at residues 832–848 (SVLRSFRLLRVFKLAKS). The Cytoplasmic segment spans residues 849–865 (WPTLNMLIKIIGNSVGA). A helical transmembrane segment spans residues 866 to 888 (LGNLTLVLAIIVFIFAVVGMQLF). Over 889 to 915 (GKSYKECVCKINDDCTLPRWHMNDFFH) the chain is Extracellular. Residues cysteine 897 and cysteine 903 are joined by a disulfide bond. Residues 916 to 928 (SFLIVFRVLCGEW) constitute an intramembrane region (pore-forming). Topologically, residues 929–940 (IETMWDCMEVAG) are extracellular. The cysteines at positions 935 and 944 are disulfide-linked. The helical transmembrane segment at 941–967 (QAMCLIVYMMVMVIGNLVVLNLFLALL) threads the bilayer. The Cytoplasmic portion of the chain corresponds to 968–1187 (LSSFSSDNLT…WWNIRKTCYK (220 aa)). A disordered region spans residues 1102–1148 (NAEELSSDSDSEYSKVRLNRSSSSECSTVDNPLPGEGEEAEAEPMNS). A compositionally biased stretch (polar residues) spans 1120-1131 (NRSSSSECSTVD). The span at 1137–1148 (EGEEAEAEPMNS) shows a compositional bias: acidic residues. The stretch at 1180–1488 (NIRKTCYKIV…KKYYNAMKKL (309 aa)) is one III repeat. The helical transmembrane segment at 1188 to 1212 (IVEHSWFESFIVLMILLSSGALAFE) threads the bilayer. At 1213–1224 (DIYIERKKTIKI) the chain is on the extracellular side. The chain crosses the membrane as a helical span at residues 1225–1250 (ILEYADKIFTYIFILEMLLKWIAYGY). Residues 1251-1252 (KT) lie on the Cytoplasmic side of the membrane. A helical transmembrane segment spans residues 1253–1278 (YFTNAWCWLDFLIVDVSLVTLVANTL). The Extracellular portion of the chain corresponds to 1279–1287 (GYSDLGPIK). Residues 1288–1304 (SLRTLRALRPLRALSRF) traverse the membrane as a helical segment. Topologically, residues 1305–1317 (EGMRVVVNALIGA) are cytoplasmic. A helical transmembrane segment spans residues 1318-1342 (IPSIMNVLLVCLIFWLIFSIMGVNL). Residues 1343–1394 (FAGKFYECINTTDGSRFPASQVPNRSECFALMNVSQNVRWKNLKVNFDNVGL) are Extracellular-facing. A disulfide bridge connects residues cysteine 1350 and cysteine 1370. Asparagine 1352, asparagine 1366, and asparagine 1375 each carry an N-linked (GlcNAc...) asparagine glycan. The pore-forming intramembrane region spans 1395–1405 (GYLSLLQVATF). Over 1406 to 1431 (KGWTIIMYAAVDSVNVDKQPKYEYSL) the chain is Extracellular. The helical transmembrane segment at 1432–1457 (YMYIYFVVFIIFGSFFTLNLFIGVII) threads the bilayer. The Cytoplasmic segment spans residues 1458–1514 (DNFNQQKKKLGGQDIFMTEEQKKYYNAMKKLGSKKPQKPIPRPGNKIQGCIFDLVTN). The residue at position 1490 (serine 1490) is a Phosphoserine; by PKC. An IV repeat occupies 1497 to 1795 (IPRPGNKIQG…WEKFDPDATQ (299 aa)). Residues 1515-1534 (QAFDISIMVLICLNMVTMMV) form a helical membrane-spanning segment. Residues 1535–1545 (EKEGQSQHMTE) are Extracellular-facing. Residues 1546–1567 (VLYWINVVFIILFTGECVLKLI) traverse the membrane as a helical segment. Residues 1568–1576 (SLRHYYFTV) lie on the Cytoplasmic side of the membrane. A helical membrane pass occupies residues 1577–1598 (GWNIFDFVVVIISIVGMFLADL). At 1599-1607 (IETYFVSPT) the chain is on the extracellular side. A helical membrane pass occupies residues 1608 to 1627 (LFRVIRLARIGRILRLVKGA). Residues 1628–1640 (KGIRTLLFALMMS) are Cytoplasmic-facing. A helical membrane pass occupies residues 1641 to 1663 (LPALFNIGLLLFLVMFIYAIFGM). The Extracellular portion of the chain corresponds to 1664 to 1686 (SNFAYVKKEDGINDMFNFETFGN). Positions 1687–1699 (SMICLFQITTSAG) form an intramembrane region, pore-forming. At 1700 to 1733 (WDGLLAPILNSKPPDCDPKKVHPGSSVEGDCGNP) the chain is on the extracellular side. Residues cysteine 1715 and cysteine 1730 are joined by a disulfide bond. A helical transmembrane segment spans residues 1734 to 1759 (SVGIFYFVSYIIISFLVVVNMYIAVI). Topologically, residues 1760–1988 (LENFSVATEE…KGKDSKESKK (229 aa)) are cytoplasmic. The IQ domain maps to 1889-1918 (EDVSATVIQRAYRRYRLRQNVKNISSIYIK). Positions 1934-1988 (FDNVNENSSPEKTDATSSTTSPPSYDSVTKPDKEKYEQDRTEKEDKGKDSKESKK) are disordered. A compositionally biased stretch (low complexity) spans 1948-1961 (ATSSTTSPPSYDSV). Over residues 1962–1988 (TKPDKEKYEQDRTEKEDKGKDSKESKK) the composition is skewed to basic and acidic residues.

The protein belongs to the sodium channel (TC 1.A.1.10) family. Nav1.7/SCN9A subfamily. The Nav1.7 voltage-gated sodium channel consists of an ion-conducting alpha subunit SCN9A which is functional on its own regulated by one or more beta-1 (SCN1B), beta-2 (SCN2B), beta-3 (SCN3B) and beta-4 (SCN4B) subunits. SCN1B and SCN3B are non-covalently associated with SCN9A. SCN2B and SCN4B are disulfide-linked to SCN9A. SCN1B regulates channel inactivation. Interacts with NEDD4 and NEDD4L; regulates Nav1.7 activity most probably through ubiquitination and subsequent endocytosis. Interacts with TMEM233; modulates the gating properties of NaV1.7. In terms of processing, phosphorylation at Ser-1490 by PKC in a highly conserved cytoplasmic loop increases peak sodium currents. Post-translationally, ubiquitinated by NEDD4L; which may promote its endocytosis. As to expression, expressed strongly in dorsal root ganglion, with only minor levels elsewhere in the body, smooth muscle cells, MTC cell line and C-cell carcinoma. Also expressed in vagus nerves within the head and neck region. Isoform 1 is expressed preferentially in the central and peripheral nervous system. Isoform 2 is expressed preferentially in the dorsal root ganglion.

It localises to the cell membrane. The protein localises to the cell projection. Its subcellular location is the neuron projection. The protein resides in the axon. It carries out the reaction Na(+)(in) = Na(+)(out). Inhibited by tetrodotoxin. Weakly inhibited by saxitoxin. Inhibited by the spider huwentoxin-IV that binds the extracellular loop S3-S4 of repeat II. Inhibited by the spider protoxin-II that binds the extracellular loop S3-S4 of repeats II and IV. Inhibited by the scorpion alpha-toxins CvIV4 and AaH2. Inhibited by the conotoxin GVIIJ. Inhibited by the spider beta/delta-theraphotoxin-Pre1a. Functionally, pore-forming subunit of Nav1.7, a voltage-gated sodium (Nav) channel that directly mediates the depolarizing phase of action potentials in excitable membranes. Navs, also called VGSCs (voltage-gated sodium channels) or VDSCs (voltage-dependent sodium channels), operate by switching between closed and open conformations depending on the voltage difference across the membrane. In the open conformation they allow Na(+) ions to selectively pass through the pore, along their electrochemical gradient. The influx of Na(+) ions provokes membrane depolarization, initiating the propagation of electrical signals throughout cells and tissues. Nav1.7 plays a crucial role in controlling the excitability and action potential propagation from nociceptor neurons, thereby contributing to the sensory perception of pain. The chain is Sodium channel protein type 9 subunit alpha from Homo sapiens (Human).